Here is a 70-residue protein sequence, read N- to C-terminus: ATP synthase subunit c (70 aa).

A run of 2 helical transmembrane segments spans residues 4 to 24 (IAAAIAIGLGALGAGIGNGLI) and 45 to 65 (LMFIGVALVEALPIIAVVIAF).

The protein belongs to the ATPase C chain family. As to quaternary structure, F-type ATPases have 2 components, F(1) - the catalytic core - and F(0) - the membrane proton channel. F(1) has five subunits: alpha(3), beta(3), gamma(1), delta(1), epsilon(1). F(0) has three main subunits: a(1), b(2) and c(10-14). The alpha and beta chains form an alternating ring which encloses part of the gamma chain. F(1) is attached to F(0) by a central stalk formed by the gamma and epsilon chains, while a peripheral stalk is formed by the delta and b chains.

The protein localises to the cell membrane. In terms of biological role, f(1)F(0) ATP synthase produces ATP from ADP in the presence of a proton or sodium gradient. F-type ATPases consist of two structural domains, F(1) containing the extramembraneous catalytic core and F(0) containing the membrane proton channel, linked together by a central stalk and a peripheral stalk. During catalysis, ATP synthesis in the catalytic domain of F(1) is coupled via a rotary mechanism of the central stalk subunits to proton translocation. Its function is as follows. Key component of the F(0) channel; it plays a direct role in translocation across the membrane. A homomeric c-ring of between 10-14 subunits forms the central stalk rotor element with the F(1) delta and epsilon subunits. The chain is ATP synthase subunit c from Bacillus licheniformis (strain ATCC 14580 / DSM 13 / JCM 2505 / CCUG 7422 / NBRC 12200 / NCIMB 9375 / NCTC 10341 / NRRL NRS-1264 / Gibson 46).